The following is a 150-amino-acid chain: UPF0178 protein Bpet3884 (150 aa).

The protein belongs to the UPF0178 family.

This Bordetella petrii (strain ATCC BAA-461 / DSM 12804 / CCUG 43448) protein is UPF0178 protein Bpet3884.